A 246-amino-acid chain; its full sequence is MADKRFFGTKTFPNQEKALKAKIMNNDAFISWIEKNLGHRPKDPALFLRAMTHPSHGNSDYQRLEFLGDRVLGLVIANWLYDLFPREPEGKLSRRLNSLVSGASCASIARIVGLPQWLRLGKQARDDGAAASDNVLGDVMEAMIGAIFLESGIEAAGKLIHKYWAPLVTGQESAPKHPKSALQEWAAAHNRRPPVYEIVSRTGPQHNPCFTIQVSIAGVGEASAEGSSKQEAQTAAAQALLDILAQ.

The 123-residue stretch at 30–152 (ISWIEKNLGH…MIGAIFLESG (123 aa)) folds into the RNase III domain. Position 65 (Glu-65) interacts with Mg(2+). The active site involves Asp-69. The Mg(2+) site is built by Asp-138 and Glu-141. Glu-141 is a catalytic residue. The DRBM domain occupies 177–246 (HPKSALQEWA…AQALLDILAQ (70 aa)).

It belongs to the ribonuclease III family. In terms of assembly, homodimer. The cofactor is Mg(2+).

Its subcellular location is the cytoplasm. It catalyses the reaction Endonucleolytic cleavage to 5'-phosphomonoester.. Its function is as follows. Digests double-stranded RNA. Involved in the processing of primary rRNA transcript to yield the immediate precursors to the large and small rRNAs (23S and 16S). Processes some mRNAs, and tRNAs when they are encoded in the rRNA operon. Processes pre-crRNA and tracrRNA of type II CRISPR loci if present in the organism. The chain is Ribonuclease 3 from Zymomonas mobilis subsp. mobilis (strain ATCC 31821 / ZM4 / CP4).